The sequence spans 382 residues: 4-hydroxy-3-methylbut-2-en-1-yl diphosphate synthase (flavodoxin) (382 aa).

[4Fe-4S] cluster contacts are provided by cysteine 290, cysteine 293, cysteine 327, and glutamate 334.

The protein belongs to the IspG family. It depends on [4Fe-4S] cluster as a cofactor.

The enzyme catalyses (2E)-4-hydroxy-3-methylbut-2-enyl diphosphate + oxidized [flavodoxin] + H2O + 2 H(+) = 2-C-methyl-D-erythritol 2,4-cyclic diphosphate + reduced [flavodoxin]. It functions in the pathway isoprenoid biosynthesis; isopentenyl diphosphate biosynthesis via DXP pathway; isopentenyl diphosphate from 1-deoxy-D-xylulose 5-phosphate: step 5/6. Its function is as follows. Converts 2C-methyl-D-erythritol 2,4-cyclodiphosphate (ME-2,4cPP) into 1-hydroxy-2-methyl-2-(E)-butenyl 4-diphosphate. The chain is 4-hydroxy-3-methylbut-2-en-1-yl diphosphate synthase (flavodoxin) from Rhodopirellula baltica (strain DSM 10527 / NCIMB 13988 / SH1).